A 237-amino-acid chain; its full sequence is Ribonuclease PH (237 aa).

Residues R86 and 124-126 (GTR) each bind phosphate.

This sequence belongs to the RNase PH family. Homohexameric ring arranged as a trimer of dimers.

It catalyses the reaction tRNA(n+1) + phosphate = tRNA(n) + a ribonucleoside 5'-diphosphate. Its function is as follows. Phosphorolytic 3'-5' exoribonuclease that plays an important role in tRNA 3'-end maturation. Removes nucleotide residues following the 3'-CCA terminus of tRNAs; can also add nucleotides to the ends of RNA molecules by using nucleoside diphosphates as substrates, but this may not be physiologically important. Probably plays a role in initiation of 16S rRNA degradation (leading to ribosome degradation) during starvation. The chain is Ribonuclease PH from Bradyrhizobium diazoefficiens (strain JCM 10833 / BCRC 13528 / IAM 13628 / NBRC 14792 / USDA 110).